A 204-amino-acid chain; its full sequence is FMN-dependent NADH:quinone oxidoreductase (204 aa).

S9 is an FMN binding site.

Belongs to the azoreductase type 1 family. As to quaternary structure, homodimer. It depends on FMN as a cofactor.

The catalysed reaction is 2 a quinone + NADH + H(+) = 2 a 1,4-benzosemiquinone + NAD(+). It catalyses the reaction N,N-dimethyl-1,4-phenylenediamine + anthranilate + 2 NAD(+) = 2-(4-dimethylaminophenyl)diazenylbenzoate + 2 NADH + 2 H(+). Quinone reductase that provides resistance to thiol-specific stress caused by electrophilic quinones. In terms of biological role, also exhibits azoreductase activity. Catalyzes the reductive cleavage of the azo bond in aromatic azo compounds to the corresponding amines. This is FMN-dependent NADH:quinone oxidoreductase from Thiobacillus denitrificans (strain ATCC 25259 / T1).